The chain runs to 284 residues: Cell division protein FtsQ (284 aa).

A compositionally biased stretch (basic residues) spans 1–10 (MAFGKSKNRR). The segment at 1-23 (MAFGKSKNRRRQDAAQQKEAVRG) is disordered. Topologically, residues 1 to 34 (MAFGKSKNRRRQDAAQQKEAVRGAVRSQGPRALK) are cytoplasmic. A helical membrane pass occupies residues 35 to 52 (VLGLTLGTGLLVWGGAAL). Topologically, residues 53–284 (REWTLTSPRF…ASERSGASMR (232 aa)) are periplasmic. Residues 62–130 (FELEAVSFSG…NRVSVEVTEH (69 aa)) form the POTRA domain.

Belongs to the FtsQ/DivIB family. FtsQ subfamily.

The protein localises to the cell inner membrane. In terms of biological role, essential cell division protein. This Myxococcus fulvus (strain ATCC BAA-855 / HW-1) protein is Cell division protein FtsQ.